Here is a 202-residue protein sequence, read N- to C-terminus: Small ribosomal subunit protein uS4 (202 aa).

Residues 90–152 (MRLDNTVFRL…ERSRRLVETN (63 aa)) form the S4 RNA-binding domain.

It belongs to the universal ribosomal protein uS4 family. In terms of assembly, part of the 30S ribosomal subunit. Contacts protein S5. The interaction surface between S4 and S5 is involved in control of translational fidelity.

Its function is as follows. One of the primary rRNA binding proteins, it binds directly to 16S rRNA where it nucleates assembly of the body of the 30S subunit. In terms of biological role, with S5 and S12 plays an important role in translational accuracy. This is Small ribosomal subunit protein uS4 from Thermosynechococcus vestitus (strain NIES-2133 / IAM M-273 / BP-1).